Here is a 167-residue protein sequence, read N- to C-terminus: Protein DLS1 (167 aa).

Position 17 is a phosphoserine (S17).

Component of the ISW2 complex, which at least consists of ISW2, ITC1, DLS1 and DPB4.

It localises to the nucleus. Its function is as follows. Functions as a component of the ISW2 complex, which acts in remodeling the chromatin by catalyzing an ATP-dependent alteration in the structure of nucleosomal DNA. The ISW2 complex is involved in coordinating transcriptional repression and in inheritance of telomeric silencing. It is involved in repression of MAT a-specific genes, INO1, and early meiotic genes during mitotic growth dependent upon transcription factor UME6 and in a parallel pathway to the RPD3-SIN3 histone deacetylase complex. DLS1 is partially required for the ISW2 complex chromatin remodeling activity and is not required for its interaction with chromatin. The sequence is that of Protein DLS1 (DLS1) from Saccharomyces cerevisiae (strain ATCC 204508 / S288c) (Baker's yeast).